A 59-amino-acid chain; its full sequence is Cuticle protein 7 isoform c (59 aa).

A Pyrrolidone carboxylic acid modification is found at Gln-1.

The chain is Cuticle protein 7 isoform c from Limulus polyphemus (Atlantic horseshoe crab).